A 49-amino-acid polypeptide reads, in one-letter code: Large ribosomal subunit protein uL16 (49 aa).

This sequence belongs to the universal ribosomal protein uL16 family. As to quaternary structure, part of the 50S ribosomal subunit.

Binds 23S rRNA and is also seen to make contacts with the A and possibly P site tRNAs. In Aquifex pyrophilus, this protein is Large ribosomal subunit protein uL16 (rplP).